Consider the following 325-residue polypeptide: NAD kinase (325 aa).

Catalysis depends on Asp-91, which acts as the Proton acceptor. Residues 91 to 92 (DG), His-96, 165 to 166 (ND), His-176, His-193, Asp-195, and 206 to 211 (TAYALS) each bind NAD(+).

The protein belongs to the NAD kinase family. It depends on a divalent metal cation as a cofactor.

It is found in the cytoplasm. It catalyses the reaction NAD(+) + ATP = ADP + NADP(+) + H(+). Involved in the regulation of the intracellular balance of NAD and NADP, and is a key enzyme in the biosynthesis of NADP. Catalyzes specifically the phosphorylation on 2'-hydroxyl of the adenosine moiety of NAD to yield NADP. This is NAD kinase from Psychrobacter arcticus (strain DSM 17307 / VKM B-2377 / 273-4).